The chain runs to 183 residues: uncharacterized protein (183 aa).

This is an uncharacterized protein from Shigella flexneri.